A 166-amino-acid polypeptide reads, in one-letter code: Nucleotide-binding protein Acid_3194 (166 aa).

The protein belongs to the YajQ family.

Its function is as follows. Nucleotide-binding protein. This chain is Nucleotide-binding protein Acid_3194, found in Solibacter usitatus (strain Ellin6076).